We begin with the raw amino-acid sequence, 377 residues long: Carbamoyl phosphate synthase small chain (377 aa).

The segment at 1 to 186 is CPSase; that stretch reads MSTPALLVLA…LGKGFVTPDE (186 aa). Residues S47, G238, and G240 each coordinate L-glutamine. One can recognise a Glutamine amidotransferase type-1 domain in the interval 190 to 377; it reads HVVAYDFGVK…IGNMKAAKRA (188 aa). C266 functions as the Nucleophile in the catalytic mechanism. 5 residues coordinate L-glutamine: L267, Q270, N308, G310, and F311. Catalysis depends on residues H350 and E352.

The protein belongs to the CarA family. As to quaternary structure, composed of two chains; the small (or glutamine) chain promotes the hydrolysis of glutamine to ammonia, which is used by the large (or ammonia) chain to synthesize carbamoyl phosphate. Tetramer of heterodimers (alpha,beta)4.

The enzyme catalyses hydrogencarbonate + L-glutamine + 2 ATP + H2O = carbamoyl phosphate + L-glutamate + 2 ADP + phosphate + 2 H(+). The catalysed reaction is L-glutamine + H2O = L-glutamate + NH4(+). It participates in amino-acid biosynthesis; L-arginine biosynthesis; carbamoyl phosphate from bicarbonate: step 1/1. The protein operates within pyrimidine metabolism; UMP biosynthesis via de novo pathway; (S)-dihydroorotate from bicarbonate: step 1/3. Its function is as follows. Small subunit of the glutamine-dependent carbamoyl phosphate synthetase (CPSase). CPSase catalyzes the formation of carbamoyl phosphate from the ammonia moiety of glutamine, carbonate, and phosphate donated by ATP, constituting the first step of 2 biosynthetic pathways, one leading to arginine and/or urea and the other to pyrimidine nucleotides. The small subunit (glutamine amidotransferase) binds and cleaves glutamine to supply the large subunit with the substrate ammonia. The sequence is that of Carbamoyl phosphate synthase small chain from Neisseria meningitidis serogroup B (strain ATCC BAA-335 / MC58).